The chain runs to 445 residues: MDIRQVTETIAMIEEQNFDIRTITMGISLLDCIDPDINRAAEKIYQKITTKAANLVAVGDEIAAELGIPIVNKRVSVTPISLIGAATDATDYVVLAKALDKAAKEIGVDFIGGFSALVQKGYQKGDEILINSIPRALAETDKVCSSVNIGSTKSGINMTAVADMGRIIKETANLSDMGVAKLVVFANAVEDNPFMAGAFHGVGEADVIINVGVSGPGVVKRALEKVRGQSFDVVAETVKKTAFKITRIGQLVGQMASERLGVEFGIVDLSLAPTPAVGDSVARVLEEMGLETVGTHGTTAALALLNDQVKKGGVMACNQVGGLSGAFIPVSEDEGMIAAVQNGSLNLEKLEAMTAICSVGLDMIAIPEDTPAETIAAMIADEAAIGVINMKTTAVRIIPKGKEGDMIEFGGLLGTAPVMKVNGASSVDFISRGGQIPAPIHSFKN.

Belongs to the UPF0210 family. Homodimer.

The protein is UPF0210 protein SP_0239 of Streptococcus pneumoniae serotype 4 (strain ATCC BAA-334 / TIGR4).